Reading from the N-terminus, the 429-residue chain is Gamma-glutamyl phosphate reductase (429 aa).

It belongs to the gamma-glutamyl phosphate reductase family.

The protein resides in the cytoplasm. It catalyses the reaction L-glutamate 5-semialdehyde + phosphate + NADP(+) = L-glutamyl 5-phosphate + NADPH + H(+). It functions in the pathway amino-acid biosynthesis; L-proline biosynthesis; L-glutamate 5-semialdehyde from L-glutamate: step 2/2. Functionally, catalyzes the NADPH-dependent reduction of L-glutamate 5-phosphate into L-glutamate 5-semialdehyde and phosphate. The product spontaneously undergoes cyclization to form 1-pyrroline-5-carboxylate. The chain is Gamma-glutamyl phosphate reductase from Methylocella silvestris (strain DSM 15510 / CIP 108128 / LMG 27833 / NCIMB 13906 / BL2).